The primary structure comprises 95 residues: Co-chaperonin GroES (95 aa).

Belongs to the GroES chaperonin family. In terms of assembly, heptamer of 7 subunits arranged in a ring. Interacts with the chaperonin GroEL.

It is found in the cytoplasm. Together with the chaperonin GroEL, plays an essential role in assisting protein folding. The GroEL-GroES system forms a nano-cage that allows encapsulation of the non-native substrate proteins and provides a physical environment optimized to promote and accelerate protein folding. GroES binds to the apical surface of the GroEL ring, thereby capping the opening of the GroEL channel. In Neisseria meningitidis serogroup C (strain 053442), this protein is Co-chaperonin GroES.